We begin with the raw amino-acid sequence, 315 residues long: Transaldolase (315 aa).

The active-site Schiff-base intermediate with substrate is the lysine 125.

The protein belongs to the transaldolase family. Type 1 subfamily. Homodimer.

It localises to the cytoplasm. The enzyme catalyses D-sedoheptulose 7-phosphate + D-glyceraldehyde 3-phosphate = D-erythrose 4-phosphate + beta-D-fructose 6-phosphate. It functions in the pathway carbohydrate degradation; pentose phosphate pathway; D-glyceraldehyde 3-phosphate and beta-D-fructose 6-phosphate from D-ribose 5-phosphate and D-xylulose 5-phosphate (non-oxidative stage): step 2/3. Transaldolase is important for the balance of metabolites in the pentose-phosphate pathway. The sequence is that of Transaldolase from Paracidovorax citrulli (strain AAC00-1) (Acidovorax citrulli).